We begin with the raw amino-acid sequence, 457 residues long: Cysteine--tRNA ligase (457 aa).

C28 serves as a coordination point for Zn(2+). The short motif at 30–40 (MTVYDLCHIGH) is the 'HIGH' region element. Residues C209, H234, and E238 each contribute to the Zn(2+) site. A 'KMSKS' region motif is present at residues 266–270 (KMSKS). K269 is a binding site for ATP.

This sequence belongs to the class-I aminoacyl-tRNA synthetase family. Monomer. Zn(2+) is required as a cofactor.

It localises to the cytoplasm. The catalysed reaction is tRNA(Cys) + L-cysteine + ATP = L-cysteinyl-tRNA(Cys) + AMP + diphosphate. The sequence is that of Cysteine--tRNA ligase from Chromobacterium violaceum (strain ATCC 12472 / DSM 30191 / JCM 1249 / CCUG 213 / NBRC 12614 / NCIMB 9131 / NCTC 9757 / MK).